Reading from the N-terminus, the 516-residue chain is Exoglucanase 1 (516 aa).

An N-terminal signal peptide occupies residues 1–17 (MRASLLAFSLAAAVAGG). Positions 18–445 (QQAGTLTAKR…GHLGISPFSG (428 aa)) are catalytic. An N-linked (GlcNAc...) asparagine glycan is attached at N45. Catalysis depends on E223, which acts as the Nucleophile. E228 serves as the catalytic Proton donor. N-linked (GlcNAc...) asparagine glycosylation is present at N281. The disordered stretch occupies residues 444 to 481 (SGGSSGTPPSNPSSSASPTSSTAKPSSTSTASNPSGTG). The segment at 446–480 (GSSGTPPSNPSSSASPTSSTAKPSSTSTASNPSGT) is linker. Residues 449–481 (GTPPSNPSSSASPTSSTAKPSSTSTASNPSGTG) are compositionally biased toward low complexity. The CBM1 domain maps to 480–516 (TGAAHWAQCGGIGFSGPTTCPEPYTCAKDHDIYSQCV). Intrachain disulfides connect C488–C505 and C499–C515.

Belongs to the glycosyl hydrolase 7 (cellulase C) family.

The protein resides in the secreted. It carries out the reaction Hydrolysis of (1-&gt;4)-beta-D-glucosidic linkages in cellulose and cellotetraose, releasing cellobiose from the non-reducing ends of the chains.. This is Exoglucanase 1 (cbh-1) from Neurospora crassa (strain ATCC 24698 / 74-OR23-1A / CBS 708.71 / DSM 1257 / FGSC 987).